The sequence spans 331 residues: UPF0194 membrane protein YbhG (331 aa).

Positions 1-19 are cleaved as a signal peptide; the sequence is MKKPVVIGLAIAAIVAVIA. The stretch at 107 to 208 forms a coiled coil; the sequence is EEIAQAAAAV…LDLQDTTLIA (102 aa).

Belongs to the UPF0194 family.

It is found in the periplasm. In Salmonella agona (strain SL483), this protein is UPF0194 membrane protein YbhG.